Consider the following 138-residue polypeptide: Large ribosomal subunit protein bL19 (138 aa).

Belongs to the bacterial ribosomal protein bL19 family.

In terms of biological role, this protein is located at the 30S-50S ribosomal subunit interface and may play a role in the structure and function of the aminoacyl-tRNA binding site. The chain is Large ribosomal subunit protein bL19 from Rickettsia akari (strain Hartford).